The primary structure comprises 95 residues: Aspartyl/glutamyl-tRNA(Asn/Gln) amidotransferase subunit C (95 aa).

The protein belongs to the GatC family. In terms of assembly, heterotrimer of A, B and C subunits.

It catalyses the reaction L-glutamyl-tRNA(Gln) + L-glutamine + ATP + H2O = L-glutaminyl-tRNA(Gln) + L-glutamate + ADP + phosphate + H(+). It carries out the reaction L-aspartyl-tRNA(Asn) + L-glutamine + ATP + H2O = L-asparaginyl-tRNA(Asn) + L-glutamate + ADP + phosphate + 2 H(+). Its function is as follows. Allows the formation of correctly charged Asn-tRNA(Asn) or Gln-tRNA(Gln) through the transamidation of misacylated Asp-tRNA(Asn) or Glu-tRNA(Gln) in organisms which lack either or both of asparaginyl-tRNA or glutaminyl-tRNA synthetases. The reaction takes place in the presence of glutamine and ATP through an activated phospho-Asp-tRNA(Asn) or phospho-Glu-tRNA(Gln). The chain is Aspartyl/glutamyl-tRNA(Asn/Gln) amidotransferase subunit C from Allorhizobium ampelinum (strain ATCC BAA-846 / DSM 112012 / S4) (Agrobacterium vitis (strain S4)).